The following is a 118-amino-acid chain: MKLRANRVGEQMKKELGDIISRKIKDPRVGFVTVTDVQVSGDLQIATVYISVLGDEEQKDSTLKGLAKAKGFIRSEIGQRIRLRKTPEISFEFDESIGYGHRIDTLLHEINKEGKREE.

This sequence belongs to the RbfA family. Monomer. Binds 30S ribosomal subunits, but not 50S ribosomal subunits or 70S ribosomes.

The protein localises to the cytoplasm. In terms of biological role, one of several proteins that assist in the late maturation steps of the functional core of the 30S ribosomal subunit. Associates with free 30S ribosomal subunits (but not with 30S subunits that are part of 70S ribosomes or polysomes). Required for efficient processing of 16S rRNA. May interact with the 5'-terminal helix region of 16S rRNA. In Bacillus cereus (strain AH187), this protein is Ribosome-binding factor A.